The chain runs to 489 residues: Glutamyl-tRNA(Gln) amidotransferase subunit A (489 aa).

Residues Lys78 and Ser153 each act as charge relay system in the active site. Ser177 serves as the catalytic Acyl-ester intermediate.

It belongs to the amidase family. GatA subfamily. Heterotrimer of A, B and C subunits.

It carries out the reaction L-glutamyl-tRNA(Gln) + L-glutamine + ATP + H2O = L-glutaminyl-tRNA(Gln) + L-glutamate + ADP + phosphate + H(+). Allows the formation of correctly charged Gln-tRNA(Gln) through the transamidation of misacylated Glu-tRNA(Gln) in organisms which lack glutaminyl-tRNA synthetase. The reaction takes place in the presence of glutamine and ATP through an activated gamma-phospho-Glu-tRNA(Gln). In Nitratidesulfovibrio vulgaris (strain DP4) (Desulfovibrio vulgaris), this protein is Glutamyl-tRNA(Gln) amidotransferase subunit A.